We begin with the raw amino-acid sequence, 123 residues long: Ribonuclease P protein component (123 aa).

Belongs to the RnpA family. As to quaternary structure, consists of a catalytic RNA component (M1 or rnpB) and a protein subunit.

It catalyses the reaction Endonucleolytic cleavage of RNA, removing 5'-extranucleotides from tRNA precursor.. Its function is as follows. RNaseP catalyzes the removal of the 5'-leader sequence from pre-tRNA to produce the mature 5'-terminus. It can also cleave other RNA substrates such as 4.5S RNA. The protein component plays an auxiliary but essential role in vivo by binding to the 5'-leader sequence and broadening the substrate specificity of the ribozyme. This Streptomyces avermitilis (strain ATCC 31267 / DSM 46492 / JCM 5070 / NBRC 14893 / NCIMB 12804 / NRRL 8165 / MA-4680) protein is Ribonuclease P protein component.